We begin with the raw amino-acid sequence, 568 residues long: Urease subunit alpha (568 aa).

The Urease domain occupies glycine 130 to phenylalanine 568. Residues histidine 135, histidine 137, and lysine 218 each contribute to the Ni(2+) site. Position 218 is an N6-carboxylysine (lysine 218). Histidine 220 contributes to the substrate binding site. Ni(2+) is bound by residues histidine 247 and histidine 273. The active-site Proton donor is histidine 321. Aspartate 361 provides a ligand contact to Ni(2+).

It belongs to the metallo-dependent hydrolases superfamily. Urease alpha subunit family. Heterotrimer of UreA (gamma), UreB (beta) and UreC (alpha) subunits. Three heterotrimers associate to form the active enzyme. The cofactor is Ni cation. Carboxylation allows a single lysine to coordinate two nickel ions.

It is found in the cytoplasm. The enzyme catalyses urea + 2 H2O + H(+) = hydrogencarbonate + 2 NH4(+). Its pathway is nitrogen metabolism; urea degradation; CO(2) and NH(3) from urea (urease route): step 1/1. The protein is Urease subunit alpha of Burkholderia ambifaria (strain ATCC BAA-244 / DSM 16087 / CCUG 44356 / LMG 19182 / AMMD) (Burkholderia cepacia (strain AMMD)).